Consider the following 615-residue polypeptide: Delta(14)-sterol reductase LBR (615 aa).

The 62-residue stretch at 1-62 (MPSRKFADGE…DIKPLTSFRQ (62 aa)) folds into the Tudor domain. Residues 1–211 (MPSRKFADGE…IRAKDLEFGG (211 aa)) are Nuclear-facing. The interval 53–109 (DIKPLTSFRQRKGGSTSSSPSRRRGSRSRSRSRSPGRPPKSARRSASASHQADIKEA) is disordered. Position 55 is an N6-acetyllysine (Lys55). The residue at position 58 (Thr58) is a Phosphothreonine. A phosphoserine mark is found at Ser59 and Ser67. A phosphoserine; by CDK1 mark is found at Ser71 and Ser86. Basic residues predominate over residues 73 to 86 (SRRRGSRSRSRSRS). Phosphoserine occurs at positions 97 and 99. Thr118 is subject to Phosphothreonine. The residue at position 128 (Ser128) is a Phosphoserine. Thr200 is subject to Phosphothreonine. Transmembrane regions (helical) follow at residues 212–232 (VPGVFLIMFGLPVFLFLLLLM), 258–278 (VFGVYLLWFLIQVVFYLLPIG), 299–319 (FYAFILTSAVIGTSLFQGVEF), 326–346 (FLQFALAATVFCVVLSVYLYM), 415–435 (VPSLAMILVNSFQLLYVVDAL), 447–467 (IIHDGFGFMLAFGDLVWVPFI), 481–501 (EVSWPMASLIIVLKFCGYVIF), and 561–581 (ACGFNHILPYFYIIYFTMLLV). Residues Lys594 and Lys601 each carry the N6-acetyllysine modification.

It belongs to the ERG4/ERG24 family. As to quaternary structure, interacts with CBX5. Interacts with DNA. Interaction with DNA is sequence independent with higher affinity for supercoiled and relaxed circular DNA than linear DNA. Interacts with lamin B. Interacts with CLNK. Interacts with TMEM147; promoting LBR localization to the nucleus inner membrane. Phosphorylated by CDK1 in mitosis when the inner nuclear membrane breaks down into vesicles that dissociate from the lamina and the chromatin. It is phosphorylated by different protein kinases in interphase when the membrane is associated with these structures. Phosphorylation of LBR and HP1 proteins may be responsible for some of the alterations in chromatin organization and nuclear structure which occur at various times during the cell cycle. Phosphorylated by SRPK1. In late anaphase LBR is dephosphorylated, probably by PP1 and/or PP2A, allowing reassociation with chromatin.

It localises to the nucleus inner membrane. It is found in the nucleus. Its subcellular location is the cytoplasm. The protein resides in the endoplasmic reticulum membrane. It catalyses the reaction 5alpha-cholest-8,14-dien-3beta-ol + NADPH + H(+) = 5alpha-cholest-8-en-3beta-ol + NADP(+). It carries out the reaction 4,4-dimethyl-5alpha-cholesta-8,24-dien-3beta-ol + NADP(+) = 4,4-dimethyl-5alpha-cholesta-8,14,24-trien-3beta-ol + NADPH + H(+). The catalysed reaction is 4,4-dimethyl-8,14-cholestadien-3beta-ol + NADPH + H(+) = 4,4-dimethyl-5alpha-cholest-8-en-3beta-ol + NADP(+). It functions in the pathway steroid biosynthesis; cholesterol biosynthesis. In terms of biological role, catalyzes the reduction of the C14-unsaturated bond of lanosterol, as part of the metabolic pathway leading to cholesterol biosynthesis. Plays a critical role in myeloid cell cholesterol biosynthesis which is essential to both myeloid cell growth and functional maturation. Mediates the activation of NADPH oxidases, perhaps by maintaining critical levels of cholesterol required for membrane lipid raft formation during neutrophil differentiation. Anchors the lamina and the heterochromatin to the inner nuclear membrane. The sequence is that of Delta(14)-sterol reductase LBR (LBR) from Pongo abelii (Sumatran orangutan).